A 306-amino-acid polypeptide reads, in one-letter code: Ribosomal protein L11 methyltransferase (306 aa).

The S-adenosyl-L-methionine site is built by Thr-152, Gly-179, Asp-201, and Asn-243.

It belongs to the methyltransferase superfamily. PrmA family.

The protein resides in the cytoplasm. It carries out the reaction L-lysyl-[protein] + 3 S-adenosyl-L-methionine = N(6),N(6),N(6)-trimethyl-L-lysyl-[protein] + 3 S-adenosyl-L-homocysteine + 3 H(+). In terms of biological role, methylates ribosomal protein L11. In Geobacter sp. (strain M21), this protein is Ribosomal protein L11 methyltransferase.